The following is a 382-amino-acid chain: tRNA-specific 2-thiouridylase MnmA (382 aa).

ATP contacts are provided by residues 18–25 (AMSGGVDS) and L44. The Nucleophile role is filled by C112. C112 and C209 are oxidised to a cystine. G136 lines the ATP pocket. An interaction with tRNA region spans residues 159–161 (RDQ). C209 functions as the Cysteine persulfide intermediate in the catalytic mechanism.

The protein belongs to the MnmA/TRMU family.

It localises to the cytoplasm. It carries out the reaction S-sulfanyl-L-cysteinyl-[protein] + uridine(34) in tRNA + AH2 + ATP = 2-thiouridine(34) in tRNA + L-cysteinyl-[protein] + A + AMP + diphosphate + H(+). In terms of biological role, catalyzes the 2-thiolation of uridine at the wobble position (U34) of tRNA, leading to the formation of s(2)U34. This chain is tRNA-specific 2-thiouridylase MnmA, found in Methylobacterium sp. (strain 4-46).